The following is a 1447-amino-acid chain: MRSRYAGATETFADSAYREKEQAFLDANDITKGRYFNEATLPALRSYAVPPVRETKVASLPVPATTPASPNVAPAPALPQAEARASEVASQGALDAETQRVTAPHPVEKHPSYSGPQPSDSRAAPQLAPGTTEISQKADGPAPEVRHAAQNLQQGQKATSSLPDTPRSSQDPSDATVRADQKDATKAIPSAQPAISTPKPQHDLPASPLPGRPVHVTDQPLSPVSSAGPYSNNTPAPTAASPATSTTEDVSAEKLPTPKRIAATQERSSFVPTTPDEQLRFEEAQSLQQNALLVSQVKDGAGTGPLTNQVISEDLPSTSTTANVAEGASEQVSKDLLPESKMPESTPAAIVESKSQPQSPLGQASSQAETVVKDVAPGTQLTKKTSSSPHPGPPPERMTTRVSSGAIRHKSVSEILGEAPKTPVSPIEKPHTVEKPTDSARAGVYDSTDSAKLRLKDRRAREKERNKFSTVVFPKQQQQPDKDGDMDLVRQQSGALIKLNEERDYLFTLFQNKAYAPPRGTALTALLSSAHKTLTTNNYLLDYQEQMDCRILRRIYDLQHANRWPLRQLKRSAEPPRQAAHWDVLLDHMKWMRTDFREERKWKLAAAKSCADWCAEYIHSDPESRSMLRVQARIPPKDSPCKNGPQSATMVSPPAELGNDAMEISHPTPDLVPSSEEDSVSEGFPDEPRHGLQDTVAPAAIFSLGSDEFTFSLDMTPTAQKLLDELPIYTPVQIAPDTNLPRFKDLPDASWKTEILPVSKYARGKIMFREDEPARKRSRYDYSQYSSGSEHPVVELPPEQTNVALFQPENRHIRDRIHPAQPFRPPTEYPMPSLGFLESRQSSQWTYAEDEELRSLVEEYSYNWSLISSCLTPSSQFTSGAERRTPWECFERWAGIEGLPSDMSKTAYFRAYHQRIDTAQRNVMAQQAAAQQQQQQQQQQGSNGNNQQPMPLIRRRGTQPIRVDRRRSSKHLALLDAMRKLAKKRETILQKQQHASQLASLRKVNEANQPKPPISSPAEFSRLKHERELKLQERQEQYRQQMIAQQRASLAARAGQMPNQQQMMNAPGRAPNAIPHNPNAPPVSTSTANGLPNGISNPLANGMPNGLPQNVGVNQGRPHVQGMHGSGGPVNNHISPNPMAMKMMPQASMQQNNAPRPNMAMQASPDNARVIREANRLQEQQRILQSRQQPSQHPLQQQQPPQAQNQQQQLPQQPQQAQQQFHAQPQFVPQGSNSPNLNMPTVNGTPNNPAMIAALQAGGGMQSPPFHNSAPQGVSTPSPRMGQPNTLSSGAVPTTISTIQSQIQRSNPNMPLEQVKQLTTERLHQYQQQQQQRMSQVAMNAAAGNLGVQPNYQVSHDGNFQPQSGMSGGPNMQVPQAQGFSPMMRVPQPSQQNRIGAGGSPAMGVAVPQQSRSATPQTQRSGSIQTGTIAGASKSPNTHSQTQSMGA.

3 disordered regions span residues 60-271 (LPVP…SSFV), 300-443 (GAGT…ARAG), and 636-689 (PKDS…DEPR). Composition is skewed to polar residues over residues 150–173 (QNLQQGQKATSSLPDTPRSSQDPS) and 219–230 (QPLSPVSSAGPY). A compositionally biased stretch (low complexity) spans 231 to 247 (SNNTPAPTAASPATSTT). A compositionally biased stretch (polar residues) spans 305–323 (PLTNQVISEDLPSTSTTAN). A compositionally biased stretch (basic and acidic residues) spans 332–342 (VSKDLLPESKM). 2 stretches are compositionally biased toward polar residues: residues 353-369 (SKSQPQSPLGQASSQAE) and 379-389 (TQLTKKTSSSP). Basic and acidic residues predominate over residues 428-438 (EKPHTVEKPTD). The 76-residue stretch at 569–644 (LKRSAEPPRQ…PPKDSPCKNG (76 aa)) folds into the HSA domain. Residues 841–899 (QSSQWTYAEDEELRSLVEEYSYNWSLISSCLTPSSQFTSGAERRTPWECFERWAGIEGL) form the Myb-like domain. 4 disordered regions span residues 923–970 (VMAQ…RSSK), 1003–1023 (KVNEANQPKPPISSPAEFSRL), 1180–1248 (QQRI…TPNN), and 1381–1447 (SPMM…SMGA). The span at 925–940 (AQQAAAQQQQQQQQQQ) shows a compositional bias: low complexity. Residues 1180-1230 (QQRILQSRQQPSQHPLQQQQPPQAQNQQQQLPQQPQQAQQQFHAQPQFVPQ) are compositionally biased toward low complexity. Composition is skewed to polar residues over residues 1231–1248 (GSNSPNLNMPTVNGTPNN) and 1408–1447 (PQQSRSATPQTQRSGSIQTGTIAGASKSPNTHSQTQSMGA).

This sequence belongs to the EAF1 family. In terms of assembly, component of the NuA4 histone acetyltransferase complex.

It localises to the nucleus. Its function is as follows. Component of the NuA4 histone acetyltransferase complex which is involved in transcriptional activation of selected genes principally by acetylation of nucleosomal histone H4 and H2A. The NuA4 complex is also involved in DNA repair. In Emericella nidulans (strain FGSC A4 / ATCC 38163 / CBS 112.46 / NRRL 194 / M139) (Aspergillus nidulans), this protein is Chromatin modification-related protein eaf1 (eaf1).